The primary structure comprises 816 residues: Auxin response factor 12 (816 aa).

The span at 1–10 (MSSSSAASIG) shows a compositional bias: low complexity. The segment at 1 to 24 (MSSSSAASIGPPQPPPPPAPPEEE) is disordered. The span at 11-20 (PPQPPPPPAP) shows a compositional bias: pro residues. A DNA-binding region (TF-B3) is located at residues 135 to 237 (FCKTLTASDT…QLLLGIRRAS (103 aa)). Positions 526–565 (NDQKQKIQPDQSYQVPTSAVLPSPTSLPSHLREKFGFSDP) are disordered. Positions 717–801 (RTFVKVYKSG…WYIKILSPED (85 aa)) constitute a PB1 domain.

The protein belongs to the ARF family. As to quaternary structure, homodimers and heterodimers.

Its subcellular location is the nucleus. Functionally, auxin response factors (ARFs) are transcriptional factors that bind specifically to the DNA sequence 5'-TGTCTC-3' found in the auxin-responsive promoter elements (AuxREs). This is Auxin response factor 12 (ARF12) from Oryza sativa subsp. indica (Rice).